An 83-amino-acid chain; its full sequence is MLVLTRRVGEKIVIGEDIVITVLKIEGNSVKIGIEAPRHVKILREELYEELKSENIKASEVSKDDLKGVLKNDKGYKGPGTSS.

Belongs to the CsrA/RsmA family. As to quaternary structure, homodimer; the beta-strands of each monomer intercalate to form a hydrophobic core, while the alpha-helices form wings that extend away from the core.

It is found in the cytoplasm. Its function is as follows. A translational regulator that binds mRNA to regulate translation initiation and/or mRNA stability. Usually binds in the 5'-UTR at or near the Shine-Dalgarno sequence preventing ribosome-binding, thus repressing translation. Its main target seems to be the major flagellin gene, while its function is anatagonized by FliW. The protein is Translational regulator CsrA of Thermotoga petrophila (strain ATCC BAA-488 / DSM 13995 / JCM 10881 / RKU-1).